The sequence spans 713 residues: DNA polymerase eta (713 aa).

The UmuC domain maps to 9–259 (VALVDMDCFF…MPIRKIRSLG (251 aa)). Mg(2+)-binding residues include D13 and M14. Mn(2+) contacts are provided by D13 and M14. R61 lines the a 2'-deoxyribonucleoside 5'-triphosphate pocket. Mg(2+) contacts are provided by D115 and E116. Positions 115 and 116 each coordinate Mn(2+). Disordered regions lie at residues 441-472 (TSFL…AVTA) and 495-527 (EASL…QSTG). Polar residues-rich tracts occupy residues 456–466 (VTSSEAKTQGS) and 497–527 (SLSS…QSTG). The UBZ3-type zinc finger occupies 628-662 (AAEDQVPCEKCGSLVPVWDMPEHMDYHFALELQKS). Zn(2+) contacts are provided by C635, C638, H650, and H654. A disordered region spans residues 677 to 705 (VSHQGKRNPKSPLACTNKRPRPEGMQTLE). Glycyl lysine isopeptide (Lys-Gly) (interchain with G-Cter in ubiquitin) cross-links involve residues K682, K686, and K694. The PIP-box motif lies at 701-708 (MQTLESFF). K709 participates in a covalent cross-link: Glycyl lysine isopeptide (Lys-Gly) (interchain with G-Cter in ubiquitin).

This sequence belongs to the DNA polymerase type-Y family. In terms of assembly, interacts with REV1. Interacts with monoubiquitinated PCNA, but not unmodified PCNA. Interacts with POLI; this interaction targets POLI to the replication machinery. Interacts with PALB2 and BRCA2; the interactions are direct and are required to sustain the recruitment of POLH at blocked replication forks and to stimulate POLH-dependent DNA synthesis on D loop substrates. Interacts (via C-terminus) with TRAIP. Interacts with ubiquitin. Interacts with POLDIP2. Mg(2+) serves as cofactor. The cofactor is Mn(2+). Post-translationally, monoubiquitinated by RCHY1/PIRH2. Ubiquitination depends on integrity of the UBZ3-type zinc finger domain and is enhanced by TRAIP. Ubiquitination inhibits the ability of PolH to interact with PCNA and to bypass UV-induced lesions.

It localises to the nucleus. The catalysed reaction is DNA(n) + a 2'-deoxyribonucleoside 5'-triphosphate = DNA(n+1) + diphosphate. With respect to regulation, the enzyme in complex with the DNA substrate binds a third divalent metal cation. The binding of this third divalent cation, which is coordinated by water molecules and two oxygen atoms from DNA and dNTP, is essential for catalyzing the DNA synthesis. In terms of biological role, DNA polymerase specifically involved in the DNA repair by translesion synthesis (TLS). Due to low processivity on both damaged and normal DNA, cooperates with the heterotetrameric (REV3L, REV7, POLD2 and POLD3) POLZ complex for complete bypass of DNA lesions. Inserts one or 2 nucleotide(s) opposite the lesion, the primer is further extended by the tetrameric POLZ complex. In the case of 1,2-intrastrand d(GpG)-cisplatin cross-link, inserts dCTP opposite the 3' guanine. Particularly important for the repair of UV-induced pyrimidine dimers. Although inserts the correct base, may cause base transitions and transversions depending upon the context. May play a role in hypermutation at immunoglobulin genes. Forms a Schiff base with 5'-deoxyribose phosphate at abasic sites, but does not have any lyase activity, preventing the release of the 5'-deoxyribose phosphate (5'-dRP) residue. This covalent trapping of the enzyme by the 5'-dRP residue inhibits its DNA synthetic activity during base excision repair, thereby avoiding high incidence of mutagenesis. Targets POLI to replication foci. The sequence is that of DNA polymerase eta (POLH) from Homo sapiens (Human).